Consider the following 166-residue polypeptide: V-type proton ATPase subunit c4 (166 aa).

Residues 1-13 (MASSGFSGDETAP) lie on the Lumenal side of the membrane. A helical transmembrane segment spans residues 14–34 (FFGFLGAAAALVFSCMGAAYG). The Cytoplasmic segment spans residues 35 to 56 (TAKSGVGVASMGVMRPELVMKS). Residues 57 to 77 (IVPVVMAGVLGIYGLIIAVII) traverse the membrane as a helical segment. At 78–96 (STGINPKAKSYYLFDGYAH) the chain is on the lumenal side. A helical membrane pass occupies residues 97-118 (LSSGLACGLAGLSAGMAIGIVG). Topologically, residues 119–130 (DAGVRANAQQPK) are cytoplasmic. Residues 131 to 156 (LFVGMILILIFAEALALYGLIVGIIL) traverse the membrane as a helical segment. The Lumenal portion of the chain corresponds to 157 to 166 (SSRAGQSRAE).

It belongs to the V-ATPase proteolipid subunit family. In terms of assembly, V-ATPase is a heteromultimeric enzyme composed of a peripheral catalytic V1 complex (components A to H) attached to an integral membrane V0 proton pore complex (components: a, c, c'', d and e). The proteolipid components c and c'' are present as a hexameric ring that forms the proton-conducting pore. Interacts with APD2.

The protein localises to the vacuole membrane. In terms of biological role, proton-conducting pore forming subunit of the membrane integral V0 complex of vacuolar ATPase. V-ATPase is responsible for acidifying a variety of intracellular compartments in eukaryotic cells. This is V-type proton ATPase subunit c4 (VHA-c4) from Arabidopsis thaliana (Mouse-ear cress).